The primary structure comprises 476 residues: Probable coniferyl aldehyde dehydrogenase (476 aa).

Residues E225 and C259 contribute to the active site.

Belongs to the aldehyde dehydrogenase family. In terms of assembly, homodimer.

The catalysed reaction is (E)-coniferaldehyde + NADP(+) + H2O = (E)-ferulate + NADPH + 2 H(+). It carries out the reaction (E)-coniferaldehyde + NAD(+) + H2O = (E)-ferulate + NADH + 2 H(+). This chain is Probable coniferyl aldehyde dehydrogenase (calB), found in Pseudomonas aeruginosa (strain ATCC 15692 / DSM 22644 / CIP 104116 / JCM 14847 / LMG 12228 / 1C / PRS 101 / PAO1).